The primary structure comprises 374 residues: Cyclin-dependent kinase 9 (374 aa).

In terms of domain architecture, Protein kinase spans 19-318; the sequence is YEKLAKIGQG…SDDALNHDFF (300 aa). ATP contacts are provided by residues 25 to 33 and K48; that span reads IGQGTFGEV. The Proton acceptor role is filled by D151. The interval 345 to 374 is disordered; the sequence is PRRRGHMPQQPANQNRNPATTSQSEFDRVF. A compositionally biased stretch (polar residues) spans 354–368; sequence QPANQNRNPATTSQS.

It belongs to the protein kinase superfamily. CMGC Ser/Thr protein kinase family. CDC2/CDKX subfamily. In terms of assembly, component of the super elongation complex (SEC). Associates with ccnt1/cyclin-T1, ccnt2/cyclin-T2 or ccnk/cyclin-K to form active P-TEFb.

The protein localises to the nucleus. The protein resides in the cytoplasm. It is found in the PML body. It carries out the reaction L-seryl-[protein] + ATP = O-phospho-L-seryl-[protein] + ADP + H(+). It catalyses the reaction L-threonyl-[protein] + ATP = O-phospho-L-threonyl-[protein] + ADP + H(+). The catalysed reaction is [DNA-directed RNA polymerase] + ATP = phospho-[DNA-directed RNA polymerase] + ADP + H(+). Protein kinase involved in the regulation of transcription. Member of the cyclin-dependent kinase pair (CDK9/cyclin-T) complex, also called positive transcription elongation factor b (P-TEFb), which facilitates the transition from abortive to productive elongation by phosphorylating the CTD (C-terminal domain) of the large subunit of RNA polymerase II (RNAP II) polr2a, supt5h and rdbp. This complex is inactive when in the 7SK snRNP complex form. Regulates cytokine inducible transcription networks by facilitating promoter recognition of target transcription factors. P-TEFb is also involved in cotranscriptional histone modification, mRNA processing and mRNA export. This Danio rerio (Zebrafish) protein is Cyclin-dependent kinase 9.